The sequence spans 289 residues: Probable ABC transporter permease protein BruAb2_0483 (289 aa).

6 consecutive transmembrane segments (helical) span residues 9–29 (FLIL…VVHL), 70–90 (VWTV…AIIL), 99–119 (VARV…AIFW), 144–166 (IQWL…LVTV), 213–233 (IAIV…WVMT), and 258–278 (FGEA…FTVI). Positions 65–279 (LWRTAVWTVA…AILLVFTVIY (215 aa)) constitute an ABC transmembrane type-1 domain.

It belongs to the binding-protein-dependent transport system permease family. The complex is composed of two ATP-binding proteins (BruAb2_0487), two transmembrane proteins (BruAb2_0483) and a solute-binding protein (BruAb2_0484).

It localises to the cell inner membrane. In terms of biological role, probably part of an ABC transporter complex. Probably responsible for the translocation of the substrate across the membrane. The sequence is that of Probable ABC transporter permease protein BruAb2_0483 from Brucella abortus biovar 1 (strain 9-941).